We begin with the raw amino-acid sequence, 475 residues long: Cytosolic enolase 3 (475 aa).

Ser-2 is subject to N-acetylserine. Residues His-200 and Glu-209 each contribute to the substrate site. Catalysis depends on Asp-252, which acts as the Proton donor. The Mg(2+) site is built by Asp-287, Glu-336, and Asp-361. Positions 336 and 361 each coordinate substrate. Lys-386 acts as the Proton acceptor in catalysis. Substrate contacts are provided by residues 413-416 (SHRC) and Lys-437.

Belongs to the enolase family. In terms of assembly, homodimer. The cofactor is Mg(2+).

Its subcellular location is the cytoplasm. The protein localises to the nucleus. It catalyses the reaction (2R)-2-phosphoglycerate = phosphoenolpyruvate + H2O. It functions in the pathway carbohydrate degradation; glycolysis; pyruvate from D-glyceraldehyde 3-phosphate: step 4/5. The sequence is that of Cytosolic enolase 3 (ENO3) from Arabidopsis thaliana (Mouse-ear cress).